Here is a 768-residue protein sequence, read N- to C-terminus: Valine--tRNA ligase (768 aa).

The short motif at 37 to 47 (PTVSGKMHMGH) is the 'HIGH' region element. The 'KMSKS' region signature appears at 510 to 514 (KMSKS). Lys513 contributes to the ATP binding site.

Belongs to the class-I aminoacyl-tRNA synthetase family. ValS type 2 subfamily.

It is found in the cytoplasm. It carries out the reaction tRNA(Val) + L-valine + ATP = L-valyl-tRNA(Val) + AMP + diphosphate. Catalyzes the attachment of valine to tRNA(Val). As ValRS can inadvertently accommodate and process structurally similar amino acids such as threonine, to avoid such errors, it has a 'posttransfer' editing activity that hydrolyzes mischarged Thr-tRNA(Val) in a tRNA-dependent manner. This Picrophilus torridus (strain ATCC 700027 / DSM 9790 / JCM 10055 / NBRC 100828 / KAW 2/3) protein is Valine--tRNA ligase.